We begin with the raw amino-acid sequence, 304 residues long: Shiftless antiviral inhibitor of ribosomal frameshifting protein homolog (304 aa).

Positions 140–156 (RRVPQRKEVSRCHRCRK) match the Nuclear localization signal motif. The Nuclear export signal signature appears at 278–287 (TENDIDDIIL).

Belongs to the SHFL family.

It localises to the cytoplasm. It is found in the nucleus. The protein resides in the P-body. Inhibits programmed -1 ribosomal frameshifting (-1PRF) of a variety of mRNAs from viruses and cellular genes. Interacts with the -1PRF signal of target mRNA and translating ribosomes and causes premature translation termination at the frameshifting site. May exhibit antiviral activity. The sequence is that of Shiftless antiviral inhibitor of ribosomal frameshifting protein homolog (shfl) from Xenopus tropicalis (Western clawed frog).